Consider the following 112-residue polypeptide: Na(+)/H(+) antiporter subunit C (112 aa).

3 helical membrane-spanning segments follow: residues 4 to 21 (LMSI…YLIL), 28 to 50 (VVVG…AGLQ), and 70 to 92 (QALI…VLAY).

Belongs to the CPA3 antiporters (TC 2.A.63) subunit C family. Forms a heterooligomeric complex that consists of seven subunits: MrpA, MrpB, MrpC, MrpD, MrpE, MrpF and MrpG.

It localises to the cell membrane. Mnh complex is a Na(+)Li(+)/H(+) antiporter involved in Na(+) and/or Li(+) excretion and Na(+) resistance. Na(+)/H(+) antiport consumes a transmembrane electrical potential, and is thus inferred to be electrogenic. Does not transport K(+), Ca(2+) or Mg(2+). This is Na(+)/H(+) antiporter subunit C (mrpC) from Alkalihalophilus pseudofirmus (strain ATCC BAA-2126 / JCM 17055 / OF4) (Bacillus pseudofirmus).